A 301-amino-acid chain; its full sequence is D-alanine--D-alanine ligase (301 aa).

Residues 99–294 (KSVLEANGIR…FSELIDMIIQ (196 aa)) form the ATP-grasp domain. 126-181 (INELGYPVVVKPTHGGSSVATFIVKEEKEIENCVSEAFKWDSEVMIEKFIKGDEIT) contributes to the ATP binding site. Positions 248, 261, and 263 each coordinate Mg(2+).

It belongs to the D-alanine--D-alanine ligase family. It depends on Mg(2+) as a cofactor. Requires Mn(2+) as cofactor.

It localises to the cytoplasm. It carries out the reaction 2 D-alanine + ATP = D-alanyl-D-alanine + ADP + phosphate + H(+). Its pathway is cell wall biogenesis; peptidoglycan biosynthesis. Cell wall formation. The protein is D-alanine--D-alanine ligase of Clostridium beijerinckii (strain ATCC 51743 / NCIMB 8052) (Clostridium acetobutylicum).